Consider the following 281-residue polypeptide: Glutamate racemase (281 aa).

Residues 10 to 11 (DS) and 42 to 43 (YG) contribute to the substrate site. Catalysis depends on cysteine 74, which acts as the Proton donor/acceptor. 75–76 (NT) contributes to the substrate binding site. The active-site Proton donor/acceptor is the cysteine 190. 191–192 (TH) provides a ligand contact to substrate.

This sequence belongs to the aspartate/glutamate racemases family.

It carries out the reaction L-glutamate = D-glutamate. The protein operates within cell wall biogenesis; peptidoglycan biosynthesis. Provides the (R)-glutamate required for cell wall biosynthesis. This is Glutamate racemase from Oenococcus oeni (strain ATCC BAA-331 / PSU-1).